The sequence spans 566 residues: MQVQKMVRDNSNNGSDKSVHWERRNNNGAGPRYRSRSGNTGALATKLSNGTLSVRGLVKDRTGSGKIAGCVEAFLDARTQLNTPWDRAKCNWLDQIDYYVQLRKTAFSKELDQLRKPMIDAYVAEMRQKFDASYGQSRAQLEAKLAQVDSEWHMVHGDVHAKLEKLVEERRFLKRLSDTIVPPRSKRSQRLSPLTKEDRANCICPQPKGMSDTAWFEAIQKKMLGMNGTIKLLETEQKLLADEKNSVRKTFWPMVEAHSRSNEFAYLEKCIRLMASQRAICFCLDIEAFETNQNVITEIGISIYDPRENMVPSMVPITKNYHLIIEESLELRNQKWVCDYKDCYLLGESYVLSLKECVHFIQSLINYYLVPVTEEDKTWSRAFVGHHVSGDLKWLETIGVKFPGRGYEGHLDHTLLLAETPGDLDVFILDTEQFYRKSYGEKGSSLGKILRLFEIPHAFLHNAGNDAYYTLHLFMKFCDVNFRKISGMDDVLKVMGQVKVWGERDVREPKVVPMSYAISIEEAVKNRTYRKGVKSSRKERVCQTEFGGLTYFGTAKDAFTSTLPTH.

A compositionally biased stretch (polar residues) spans 1–16; that stretch reads MQVQKMVRDNSNNGSD. The interval 1–41 is disordered; it reads MQVQKMVRDNSNNGSDKSVHWERRNNNGAGPRYRSRSGNTG.

Functionally, high-copy suppressor of DBP5 mutation. The polypeptide is Good for full DBP5 activity protein 2 (GFD2) (Saccharomyces cerevisiae (strain ATCC 204508 / S288c) (Baker's yeast)).